We begin with the raw amino-acid sequence, 847 residues long: DNA mismatch repair protein MutS (847 aa).

ATP is bound at residue 603 to 610; that stretch reads GPNMSGKS.

Belongs to the DNA mismatch repair MutS family.

Its function is as follows. This protein is involved in the repair of mismatches in DNA. It is possible that it carries out the mismatch recognition step. This protein has a weak ATPase activity. The chain is DNA mismatch repair protein MutS from Streptococcus suis (strain 98HAH33).